The following is a 506-amino-acid chain: Cobyric acid synthase (506 aa).

In terms of domain architecture, GATase cobBQ-type spans 251–448 (DITIAIVQLP…LHGLFDSDAF (198 aa)). Cysteine 332 (nucleophile) is an active-site residue. Histidine 440 is a catalytic residue.

This sequence belongs to the CobB/CobQ family. CobQ subfamily.

Its pathway is cofactor biosynthesis; adenosylcobalamin biosynthesis. In terms of biological role, catalyzes amidations at positions B, D, E, and G on adenosylcobyrinic A,C-diamide. NH(2) groups are provided by glutamine, and one molecule of ATP is hydrogenolyzed for each amidation. The sequence is that of Cobyric acid synthase from Salmonella agona (strain SL483).